Consider the following 695-residue polypeptide: Adhesion G protein-coupled receptor F4 (695 aa).

Residues 1 to 21 (MKMKSQATMICCLVFFLSTEC) form the signal peptide. At 22–406 (SHYRSKIHLK…TDKVLDYITC (385 aa)) the chain is on the extracellular side. Residues N61, N169, N177, N209, N229, N250, N257, N263, N264, N286, N309, and N340 are each glycosylated (N-linked (GlcNAc...) asparagine). The GAIN-B domain maps to 249-397 (HNTSEKSLNF…SILMSSKSMT (149 aa)). 2 disulfides stabilise this stretch: C349-C376 and C364-C378. The segment at 349–397 (CVGWHSKKRRWDEKACQMMLDIRNEVKCRCNYTSVVMSFSILMSSKSMT) is GPS. N379 carries N-linked (GlcNAc...) asparagine glycosylation. The helical transmembrane segment at 407 to 427 (IGLSVSILSLVLCLIIEATVW) threads the bilayer. The Cytoplasmic segment spans residues 428 to 440 (SRVVVTEISYMRH). The helical transmembrane segment at 441 to 461 (VCIVNIAVSLLTANVWFIIGS) threads the bilayer. The Extracellular segment spans residues 462 to 485 (HFNIKAQDYNMCVAVTFFSHFFYL). Residues 486 to 506 (SLFFWMLFKALLIIYGILVIF) form a helical membrane-spanning segment. The Cytoplasmic segment spans residues 507–515 (RRMMKSRMM). A helical membrane pass occupies residues 516–536 (VIGFAIGYGCPLIIAVTTVAI). The Extracellular segment spans residues 537–561 (TEPEKGYMRPEACWLNWDNTKALLA). A helical transmembrane segment spans residues 562–582 (FAIPAFVIVAVNLIVVLVVAV). Residues 583–606 (NTQRPSIGSSKSQDVVIIMRISKN) are Cytoplasmic-facing. A helical transmembrane segment spans residues 607 to 627 (VAILTPLLGLTWGFGIATLIE). The Extracellular segment spans residues 628–634 (GTSLTFH). Residues 635 to 655 (IIFALLNAFQGFFILLFGTIM) form a helical membrane-spanning segment. Residues 656-695 (DHKIRDALRMRMSSLKGKSRAAENASLGPTNGSKLMNRQG) lie on the Cytoplasmic side of the membrane. Positions 674–695 (SRAAENASLGPTNGSKLMNRQG) are disordered. Positions 682 to 695 (LGPTNGSKLMNRQG) are enriched in polar residues.

Belongs to the G-protein coupled receptor 2 family. Adhesion G-protein coupled receptor (ADGR) subfamily.

It localises to the membrane. Functionally, orphan receptor. In Homo sapiens (Human), this protein is Adhesion G protein-coupled receptor F4 (ADGRF4).